Reading from the N-terminus, the 283-residue chain is Polyamine aminopropyltransferase (283 aa).

The region spanning 5-241 (NNWYIEHFER…GWWSVTLARK (237 aa)) is the PABS domain. Position 35 (Gln-35) interacts with S-methyl-5'-thioadenosine. His-66 and Asp-90 together coordinate spermidine. Residues Asp-110 and 141-142 (DG) each bind S-methyl-5'-thioadenosine. Asp-160 serves as the catalytic Proton acceptor. 160–163 (DSTD) serves as a coordination point for spermidine. Residue Pro-167 participates in S-methyl-5'-thioadenosine binding.

The protein belongs to the spermidine/spermine synthase family. Homodimer or homotetramer.

Its subcellular location is the cytoplasm. It carries out the reaction S-adenosyl 3-(methylsulfanyl)propylamine + putrescine = S-methyl-5'-thioadenosine + spermidine + H(+). The protein operates within amine and polyamine biosynthesis; spermidine biosynthesis; spermidine from putrescine: step 1/1. Functionally, catalyzes the irreversible transfer of a propylamine group from the amino donor S-adenosylmethioninamine (decarboxy-AdoMet) to putrescine (1,4-diaminobutane) to yield spermidine. This is Polyamine aminopropyltransferase from Stenotrophomonas maltophilia (strain R551-3).